Consider the following 199-residue polypeptide: Protein CPL1 (199 aa).

An N-terminal signal peptide occupies residues 1 to 30; it reads MFSIPPSVRRLVFLFLIAAPLLSIVLPVAA. Positions 34-58 are disordered; the sequence is GVDPPSKLQPRAPQPSRRMGATKRS. An N-linked (GlcNAc...) asparagine glycan is attached at Asn148.

It localises to the secreted. Its function is as follows. Virulence factor which promotes fungal virulence by enhancing type 2 inflammation in the mouse host. Likely binds mouse Tlr4 independently of Ly96/Md2 and activates Tlr4 signaling to drive Stat3 phosphorylation in interstitial macrophages, which promotes the initial induction of Arg1/arginase-1 and increases macrophage sensitivity to Il4 signaling. The chain is Protein CPL1 from Cryptococcus neoformans var. grubii serotype A (strain H99 / ATCC 208821 / CBS 10515 / FGSC 9487) (Filobasidiella neoformans var. grubii).